Reading from the N-terminus, the 297-residue chain is Phosphoribosylaminoimidazole-succinocarboxamide synthase (297 aa).

This sequence belongs to the SAICAR synthetase family.

It carries out the reaction 5-amino-1-(5-phospho-D-ribosyl)imidazole-4-carboxylate + L-aspartate + ATP = (2S)-2-[5-amino-1-(5-phospho-beta-D-ribosyl)imidazole-4-carboxamido]succinate + ADP + phosphate + 2 H(+). The protein operates within purine metabolism; IMP biosynthesis via de novo pathway; 5-amino-1-(5-phospho-D-ribosyl)imidazole-4-carboxamide from 5-amino-1-(5-phospho-D-ribosyl)imidazole-4-carboxylate: step 1/2. The chain is Phosphoribosylaminoimidazole-succinocarboxamide synthase from Mycobacterium sp. (strain KMS).